The sequence spans 367 residues: Probable dual-specificity RNA methyltransferase RlmN (367 aa).

The Proton acceptor role is filled by E92. The Radical SAM core domain maps to 98–326; it reads QEYGLSVCVT…YDTLKKNGIN (229 aa). C105 and C341 are joined by a disulfide. Positions 112, 116, and 119 each coordinate [4Fe-4S] cluster. Residues 164–165, S196, 219–221, and N297 contribute to the S-adenosyl-L-methionine site; these read GE and SLH. C341 serves as the catalytic S-methylcysteine intermediate.

It belongs to the radical SAM superfamily. RlmN family. [4Fe-4S] cluster is required as a cofactor.

It localises to the cytoplasm. It catalyses the reaction adenosine(2503) in 23S rRNA + 2 reduced [2Fe-2S]-[ferredoxin] + 2 S-adenosyl-L-methionine = 2-methyladenosine(2503) in 23S rRNA + 5'-deoxyadenosine + L-methionine + 2 oxidized [2Fe-2S]-[ferredoxin] + S-adenosyl-L-homocysteine. The enzyme catalyses adenosine(37) in tRNA + 2 reduced [2Fe-2S]-[ferredoxin] + 2 S-adenosyl-L-methionine = 2-methyladenosine(37) in tRNA + 5'-deoxyadenosine + L-methionine + 2 oxidized [2Fe-2S]-[ferredoxin] + S-adenosyl-L-homocysteine. In terms of biological role, specifically methylates position 2 of adenine 2503 in 23S rRNA and position 2 of adenine 37 in tRNAs. The chain is Probable dual-specificity RNA methyltransferase RlmN from Listeria innocua serovar 6a (strain ATCC BAA-680 / CLIP 11262).